The following is a 461-amino-acid chain: Ribitol-5-phosphate transferase FKTN (461 aa).

Residues 1-7 (MSRINKN) lie on the Cytoplasmic side of the membrane. The interval 6–27 (KNVVLALLTLTSSAFLLFQLYY) is required and sufficient for interaction with POMGNT1. A helical; Signal-anchor for type II membrane protein transmembrane segment spans residues 8-28 (VVLALLTLTSSAFLLFQLYYY). At 29 to 461 (KHYLSARNGP…SEWDEVIQLY (433 aa)) the chain is on the lumenal side. An N-linked (GlcNAc...) asparagine glycan is attached at N92.

This sequence belongs to the LicD transferase family. Forms a complex composed of FKTN/fukutin, FKRP and RXYLT1/TMEM5. Interacts (via transmembrane domain) with POMGNT1; the interaction is direct and is required for normal POMGNT1 location in Golgi membranes. Expressed in the retina, with highest levels found in the inner segments of photoreceptors and the outer plexiform layer (at protein level). Expressed at lower levels in the inner and outer nuclear layers, the inner plexiform layers, and the ganglion cell layers of the retina (at protein level). Expressed in the heart, brain, spleen, lung, liver, skeletal muscle, kidney and testis.

The protein localises to the golgi apparatus membrane. Its subcellular location is the cytoplasm. The protein resides in the nucleus. It localises to the endoplasmic reticulum. It catalyses the reaction 3-O-[beta-D-GalNAc-(1-&gt;3)-beta-D-GlcNAc-(1-&gt;4)-(O-6-P-alpha-D-Man)]-Thr-[protein] + CDP-L-ribitol = 3-O-[Rib-ol-P-3-beta-D-GalNAc-(1-&gt;3)-beta-D-GlcNAc-(1-&gt;4)-(O-6-P-alpha-D-Man)]-Thr-[protein] + CMP + H(+). Its pathway is protein modification; protein glycosylation. Functionally, catalyzes the transfer of CDP-ribitol to the distal N-acetylgalactosamine of the phosphorylated O-mannosyl trisaccharide (N-acetylgalactosamine-beta-3-N-acetylglucosamine-beta-4-(phosphate-6-)mannose), a carbohydrate structure present in alpha-dystroglycan (DAG1). This constitutes the first step in the formation of the ribitol 5-phosphate tandem repeat which links the phosphorylated O-mannosyl trisaccharide to the ligand binding moiety composed of repeats of 3-xylosyl-alpha-1,3-glucuronic acid-beta-1. Required for normal location of POMGNT1 in Golgi membranes, and for normal POMGNT1 activity. May interact with and reinforce a large complex encompassing the outside and inside of muscle membranes. Could be involved in brain development. The chain is Ribitol-5-phosphate transferase FKTN from Mus musculus (Mouse).